Reading from the N-terminus, the 439-residue chain is Coiled-coil domain-containing protein 166 (439 aa).

Residues Met-1–Ser-28 are disordered. Residues Pro-9–Ala-23 show a composition bias toward low complexity. Coiled-coil stretches lie at residues Leu-27–Arg-74 and Asp-121–Leu-213. A disordered region spans residues Pro-276–Ala-439. The span at Val-338–Arg-365 shows a compositional bias: polar residues. Composition is skewed to low complexity over residues Ser-376–Ser-392 and Ala-428–Ala-439.

The sequence is that of Coiled-coil domain-containing protein 166 (CCDC166) from Homo sapiens (Human).